The following is a 570-amino-acid chain: Alpha-1,2-mannosyltransferase ALG9 (570 aa).

The disordered stretch occupies residues 1 to 37 (MDLTTTRQRRPLISDSSSSSSTKSYSKTDKPGRSNGG). Over residues 14–25 (SDSSSSSSTKSY) the composition is skewed to low complexity. Transmembrane regions (helical) follow at residues 129 to 149 (AVRL…VVAL), 160 to 180 (YAVA…SFLP), 208 to 228 (VVGV…VVIY), 237 to 257 (AFIA…LVDY), 297 to 317 (FNNF…YPVI), 324 to 344 (ALLV…LQPH), 349 to 369 (FLYP…ENIP), and 381 to 401 (SLLV…ILCA). N-linked (GlcNAc...) asparagine glycosylation occurs at Asn473.

It belongs to the glycosyltransferase 22 family.

It is found in the endoplasmic reticulum membrane. It catalyses the reaction an alpha-D-Man-(1-&gt;2)-alpha-D-Man-(1-&gt;2)-alpha-D-Man-(1-&gt;3)-[alpha-D-Man-(1-&gt;3)-alpha-D-Man-(1-&gt;6)]-beta-D-Man-(1-&gt;4)-beta-D-GlcNAc-(1-&gt;4)-alpha-D-GlcNAc-diphospho-di-trans,poly-cis-dolichol + a di-trans,poly-cis-dolichyl beta-D-mannosyl phosphate = an alpha-D-Man-(1-&gt;2)-alpha-D-Man-(1-&gt;2)-alpha-D-Man-(1-&gt;3)-[alpha-D-Man-(1-&gt;2)-alpha-D-Man-(1-&gt;3)-alpha-D-Man-(1-&gt;6)]-beta-D-Man-(1-&gt;4)-beta-D-GlcNAc-(1-&gt;4)-alpha-D-GlcNAc-diphospho-di-trans,poly-cis-dolichol + a di-trans,poly-cis-dolichyl phosphate + H(+). The catalysed reaction is an alpha-D-Man-(1-&gt;2)-alpha-D-Man-(1-&gt;2)-alpha-D-Man-(1-&gt;3)-[alpha-D-Man-(1-&gt;2)-alpha-D-Man-(1-&gt;3)-[alpha-D-Man-(1-&gt;6)]-alpha-D-Man-(1-&gt;6)]-beta-D-Man-(1-&gt;4)-beta-D-GlcNAc-(1-&gt;4)-alpha-D-GlcNAc-diphospho-di-trans,poly-cis-dolichol + a di-trans,poly-cis-dolichyl beta-D-mannosyl phosphate = an alpha-D-Man-(1-&gt;2)-alpha-D-Man-(1-&gt;2)-alpha-D-Man-(1-&gt;3)-[alpha-D-Man-(1-&gt;2)-alpha-D-Man-(1-&gt;3)-[alpha-D-Man-(1-&gt;2)-alpha-D-Man-(1-&gt;6)]-alpha-D-Man-(1-&gt;6)]-beta-D-Man-(1-&gt;4)-beta-D-GlcNAc-(1-&gt;4)-alpha-D-GlcNAc-diphospho-di-trans,poly-cis-dolichol + a di-trans,poly-cis-dolichyl phosphate + H(+). It functions in the pathway protein modification; protein glycosylation. Its function is as follows. Mannosyltransferase that operates in the biosynthetic pathway of dolichol-linked oligosaccharides, the glycan precursors employed in protein asparagine (N)-glycosylation. The assembly of dolichol-linked oligosaccharides begins on the cytosolic side of the endoplasmic reticulum membrane and finishes in its lumen. The sequential addition of sugars to dolichol pyrophosphate produces dolichol-linked oligosaccharides containing fourteen sugars, including two GlcNAcs, nine mannoses and three glucoses. Once assembled, the oligosaccharide is transferred from the lipid to nascent proteins by oligosaccharyltransferases. In the lumen of the endoplasmic reticulum, catalyzes the addition of the seventh and ninth alpha-1,2-linked mannose residues to Man(6)GlcNAc(2)-PP-dolichol and Man(8)GlcNAc(2)-PP-dolichol respectively. The polypeptide is Alpha-1,2-mannosyltransferase ALG9 (ALG9) (Arabidopsis thaliana (Mouse-ear cress)).